A 116-amino-acid polypeptide reads, in one-letter code: Cation channel sperm-associated auxiliary subunit TMEM262 (116 aa).

The Cytoplasmic segment spans residues 1-16; sequence MRWRDRIAVLCFPPGL. The helical transmembrane segment at 17-38 threads the bilayer; sequence MLTVAALILFFIHMGVFASDVH. The Extracellular portion of the chain corresponds to 39–51; the sequence is NFCVIHNYDHMSF. A helical transmembrane segment spans residues 52-72; that stretch reads RYTVVLIFSQVISIGWAAMGS. Residues 73–84 are Cytoplasmic-facing; that stretch reads LYAEMTGDKFLR. The chain crosses the membrane as a helical span at residues 85–107; that stretch reads CFALTILILNGAMFFNRLCLEFL. At 108–116 the chain is on the extracellular side; sequence AINYREERH.

Component of the CatSper complex or CatSpermasome composed of the core pore-forming members CATSPER1, CATSPER2, CATSPER3 and CATSPER4 as well as auxiliary members CATSPERB, CATSPERG, CATSPERD, CATSPERE, CATSPERZ, C2CD6/CATSPERT, SLCO6C1, TMEM249, TMEM262 and EFCAB9. HSPA1 may be an additional auxiliary complex member. The core complex members CATSPER1, CATSPER2, CATSPER3 and CATSPER4 form a heterotetrameric channel. The auxiliary CATSPERB, CATSPERG2, CATSPERD and CATSPERE subunits form a pavilion-like structure over the pore which stabilizes the complex through interactions with CATSPER4, CATSPER3, CATSPER1 and CATSPER2 respectively. SLCO6C1 interacts with CATSPERE and TMEM262/CATSPERH interacts with CATSPERB, further stabilizing the complex. C2CD6/CATSPERT interacts at least with CATSPERD and is required for targeting the CatSper complex in the flagellar membrane.

The protein localises to the cell projection. Its subcellular location is the cilium. The protein resides in the flagellum membrane. Functionally, auxiliary component of the CatSper complex, a complex involved in sperm cell hyperactivation. The sequence is that of Cation channel sperm-associated auxiliary subunit TMEM262 from Mus musculus (Mouse).